A 979-amino-acid polypeptide reads, in one-letter code: UPF0182 protein BCG_0095 (979 aa).

7 consecutive transmembrane segments (helical) span residues Leu19–Ile39, Leu63–Leu83, Leu114–Asp134, Trp174–Gly194, Val211–Asp231, Lys260–Leu280, and Met288–Met308. Residues Gly898–Ala948 form a disordered region. A compositionally biased stretch (low complexity) spans Val902–Ser912. Positions Ala913–Pro946 are enriched in pro residues.

It belongs to the UPF0182 family.

The protein localises to the cell membrane. This is UPF0182 protein BCG_0095 from Mycobacterium bovis (strain BCG / Pasteur 1173P2).